The sequence spans 305 residues: UDP-3-O-acyl-N-acetylglucosamine deacetylase (305 aa).

The Zn(2+) site is built by His78, His237, and Asp241. The active-site Proton donor is His264.

This sequence belongs to the LpxC family. The cofactor is Zn(2+).

It carries out the reaction a UDP-3-O-[(3R)-3-hydroxyacyl]-N-acetyl-alpha-D-glucosamine + H2O = a UDP-3-O-[(3R)-3-hydroxyacyl]-alpha-D-glucosamine + acetate. It functions in the pathway glycolipid biosynthesis; lipid IV(A) biosynthesis; lipid IV(A) from (3R)-3-hydroxytetradecanoyl-[acyl-carrier-protein] and UDP-N-acetyl-alpha-D-glucosamine: step 2/6. In terms of biological role, catalyzes the hydrolysis of UDP-3-O-myristoyl-N-acetylglucosamine to form UDP-3-O-myristoylglucosamine and acetate, the committed step in lipid A biosynthesis. This chain is UDP-3-O-acyl-N-acetylglucosamine deacetylase, found in Paraburkholderia phytofirmans (strain DSM 17436 / LMG 22146 / PsJN) (Burkholderia phytofirmans).